A 578-amino-acid polypeptide reads, in one-letter code: Vacuolar protein 8 (578 aa).

A lipid anchor (N-myristoyl glycine) is attached at Gly-2. S-palmitoyl cysteine attachment occurs at residues Cys-4, Cys-5, and Cys-7. Phosphoserine is present on residues Ser-11 and Ser-16. ARM repeat units lie at residues 37-75 (DKDQ…AEIT), 76-114 (EKYV…NLAV), 116-155 (NENK…NLAT), 157-196 (DDNK…NMTH), 198-237 (EENR…NIAV), 239-280 (EANR…NLAS), 282-321 (TSYQ…NISI), 323-363 (PLNE…NLAA), and 407-446 (DVSK…NLCS). A Glycyl lysine isopeptide (Lys-Gly) (interchain with G-Cter in ubiquitin) cross-link involves residue Lys-77. Lys-515 participates in a covalent cross-link: Glycyl lysine isopeptide (Lys-Gly) (interchain with G-Cter in ubiquitin). The interval 527–557 (SGIDVKNPGSNNNPSSNDNNSNNNDTGSEHQ) is disordered. A compositionally biased stretch (low complexity) spans 533 to 552 (NPGSNNNPSSNDNNSNNNDT).

This sequence belongs to the beta-catenin family. As to quaternary structure, interacts with NVJ1. Forms heterotetramers of two VAC8 and two NVJ1 or two VAC8 and two ATG13. Palmitoylated on one or more of its N-terminal cysteine residues by PFA3, which is required for vacuole fusion.

It localises to the vacuole membrane. Its function is as follows. Functions in both vacuole inheritance and protein targeting from the cytoplasm to vacuole (cvt). Involved in the formation of nucleus-vacuole junctions (NVJs) during piecemeal microautophagy of the nucleus (PMN). NVJs are interorganelle interfaces mediated by NVJ1 in the nuclear envelope and VAC8 on the vacuole membrane. Together, NVJ1 and VAC8 form Velcro-like patches through which teardrop-like portions of the nucleus are pinched off into the vacuolar lumen and degraded by the PMN process. The protein is Vacuolar protein 8 (VAC8) of Saccharomyces cerevisiae (strain ATCC 204508 / S288c) (Baker's yeast).